The sequence spans 494 residues: ETS translocation variant 4 (494 aa).

Disordered stretches follow at residues 82–113 (ENSV…SHKQ) and 139–201 (AGGS…SGSA). Residues 100–113 (SPGSDPSQSCSHKQ) show a composition bias toward polar residues. The span at 176–187 (SSSQSHACHSHS) shows a compositional bias: low complexity. Residues 188 to 197 (YPMNPSSRFP) show a composition bias toward polar residues. A DNA-binding region (ETS) is located at residues 350–430 (LQLWQFLVAL…AGERYVYKFV (81 aa)).

The protein belongs to the ETS family. Post-translationally, phosphorylated. In the embryo, expressed ubiquitously until the late blastula stage, in the marginal zone of gastrula stages, in the presumptive forebrain and hindbrain and in the trunk region of early somite stages. In later stages, also expressed in Rohon-Beard neurons, epiphysis, lateral line placodes, pectoral fin buds, developing lens and heart.

Its subcellular location is the nucleus. Its function is as follows. Transcriptional activator that binds to the (5'-CCGGA[AT]-3') motif. May control the acquisition of specific cell fates at an early stage during development of the somites and nervous system. May mediate the cellular effects of the fibroblast growth factors on embryogenesis. The polypeptide is ETS translocation variant 4 (etv4) (Danio rerio (Zebrafish)).